A 262-amino-acid chain; its full sequence is Tetrahydromethanopterin S-methyltransferase subunit C (262 aa).

7 consecutive transmembrane segments (helical) span residues leucine 27–leucine 47, proline 72–isoleucine 92, leucine 98–valine 118, alanine 145–isoleucine 165, valine 173–isoleucine 193, lysine 200–alanine 220, and leucine 222–valine 242.

The protein belongs to the MtrC family. As to quaternary structure, the complex is composed of 8 subunits; MtrA, MtrB, MtrC, MtrD, MtrE, MtrF, MtrG and MtrH.

It is found in the cell membrane. It catalyses the reaction 5-methyl-5,6,7,8-tetrahydromethanopterin + coenzyme M + 2 Na(+)(in) = 5,6,7,8-tetrahydromethanopterin + methyl-coenzyme M + 2 Na(+)(out). Its pathway is one-carbon metabolism; methanogenesis from CO(2); methyl-coenzyme M from 5,10-methylene-5,6,7,8-tetrahydromethanopterin: step 2/2. In terms of biological role, part of a complex that catalyzes the formation of methyl-coenzyme M and tetrahydromethanopterin from coenzyme M and methyl-tetrahydromethanopterin. This is an energy-conserving, sodium-ion translocating step. The chain is Tetrahydromethanopterin S-methyltransferase subunit C from Methanococcus maripaludis (strain C5 / ATCC BAA-1333).